Reading from the N-terminus, the 530-residue chain is Glutamyl-tRNA reductase 2, chloroplastic (530 aa).

A chloroplast-targeting transit peptide spans 1–64; sequence MAVSSAFVVT…RCEISPSNKA (64 aa). Substrate-binding positions include 134–137, S194, 199–201, and Q205; these read TCNR and EGQ. C135 (nucleophile) is an active-site residue. NADP(+) is bound at residue 277–282; sequence GAGKMG.

The protein belongs to the glutamyl-tRNA reductase family. In terms of tissue distribution, expressed in roots and flowers. Detected in leaves, hypocotyls and cotyledons.

It localises to the plastid. The protein resides in the chloroplast. The enzyme catalyses (S)-4-amino-5-oxopentanoate + tRNA(Glu) + NADP(+) = L-glutamyl-tRNA(Glu) + NADPH + H(+). The protein operates within porphyrin-containing compound metabolism; protoporphyrin-IX biosynthesis; 5-aminolevulinate from L-glutamyl-tRNA(Glu): step 1/2. It participates in porphyrin-containing compound metabolism; chlorophyll biosynthesis. Functionally, catalyzes the NADPH-dependent reduction of glutamyl-tRNA(Glu) to glutamate 1-semialdehyde (GSA). Probably involved in wound-induced supply of heme to defensive hemoproteins outside plastids. In Arabidopsis thaliana (Mouse-ear cress), this protein is Glutamyl-tRNA reductase 2, chloroplastic (HEMA2).